The sequence spans 212 residues: Ribosomal RNA small subunit methyltransferase G (212 aa).

S-adenosyl-L-methionine-binding positions include glycine 80, leucine 85, 131–132, and arginine 146; that span reads AE.

The protein belongs to the methyltransferase superfamily. RNA methyltransferase RsmG family.

It localises to the cytoplasm. The catalysed reaction is guanosine(527) in 16S rRNA + S-adenosyl-L-methionine = N(7)-methylguanosine(527) in 16S rRNA + S-adenosyl-L-homocysteine. In terms of biological role, specifically methylates the N7 position of guanine in position 527 of 16S rRNA. This Xanthomonas campestris pv. campestris (strain B100) protein is Ribosomal RNA small subunit methyltransferase G.